A 196-amino-acid chain; its full sequence is DnaA initiator-associating protein DiaA (196 aa).

Positions 34-196 (LVQSLLNGNK…DNTLFPHQAD (163 aa)) constitute an SIS domain.

This sequence belongs to the SIS family. DiaA subfamily. Homotetramer; dimer of dimers.

In terms of biological role, required for the timely initiation of chromosomal replication via direct interactions with the DnaA initiator protein. The chain is DnaA initiator-associating protein DiaA from Edwardsiella ictaluri (strain 93-146).